Consider the following 258-residue polypeptide: Terpene cyclase macJ (258 aa).

Transmembrane regions (helical) follow at residues 29–49 (VPDG…ILMA), 58–78 (YAMP…YGFV), 83–103 (LLNQ…FYAI), 124–144 (IIVV…ATFI), 151–171 (VVFM…IAQL), 181–201 (SWGI…CFFW), and 220–240 (FLLL…VYVQ).

It belongs to the paxB family.

It is found in the membrane. It functions in the pathway secondary metabolite biosynthesis; terpenoid biosynthesis. Functionally, terpene cyclase; part of the gene cluster that mediates the biosynthesis of macrophorins, isoprenoid epoxycyclohexenones containing cyclized drimane moieties. The first step of the pathway is the synthesis of 6-methylsalicylic acid (6-MSA) by the polyketide synthase macA. 6-MSA is then converted to m-cresol by the decarboxylase macB. The cytochrome P450 monooxygenase macC then catalyzes the oxidation of m-cresol to toluquinol. Epoxidation of toluquinol is then performed by the short chain dehydrogenase macD, with the help of macE, and a further prenylation by macG leads to 7-deacetoxyyanuthone A. The next step is the hydroxylation of C-22 of 7-deacetoxyyanuthone A by the cytochrome P450 monooxygenase macH to yield 22-deacetylyanuthone A. O-Mevalon transferase macI then attaches mevalon to the hydroxyl group of 22-deacetylyanuthone A to produce yanuthone E. The terpene cyclase macJ catalyzes the cyclization of 22-deacetylyanuthone A to macrophorin A. MacJ is also able to catalyze cyclization of yanuthone E and 7-deacetoxyyanuthone A to their corresponding macrophorins. The macJ products can be further modified by macH and macJ, as well as by the FAD-dependent monooxygenase macF, to produce additional macrophorins, including 4'-oxomacrophorin A, 4'-oxomacrophorin D and 4'-oxomacrophorin E. This Penicillium terrestre protein is Terpene cyclase macJ.